Consider the following 360-residue polypeptide: Phospho-N-acetylmuramoyl-pentapeptide-transferase (360 aa).

Over 1 to 25 the chain is Periplasmic; sequence MLVWLAEHLVKYYSGFNVFSYLTFR. A helical membrane pass occupies residues 26-46; that stretch reads AIVSLLTALFISLWMGPRMIA. Residues 47–71 lie on the Cytoplasmic side of the membrane; it reads RLQKLSFGQVVRNDGPESHFSKRGT. The helical transmembrane segment at 72–92 threads the bilayer; the sequence is PTMGGIMILTAIVISVLLWAY. A topological domain (periplasmic) is located at residue Pro93. The helical transmembrane segment at 94 to 114 threads the bilayer; it reads SNPYVWCVLVVLIGYGIIGFV. At 115 to 131 the chain is on the cytoplasmic side; the sequence is DDYRKVVRKDTKGLIAR. Residues 132–152 traverse the membrane as a helical segment; sequence WKYFWMSVIALGVAFALYLVG. Topologically, residues 153–167 are periplasmic; sequence KDTPATQLVVPFFKD. Residues 168–188 form a helical membrane-spanning segment; sequence VMPQLGLFYILLSYFVIVGTG. Residues 189-198 lie on the Cytoplasmic side of the membrane; sequence NAVNLTDGLD. The chain crosses the membrane as a helical span at residues 199 to 219; the sequence is GLAIMPTVFVAAGFALVAWAT. Residues 220 to 235 are Periplasmic-facing; the sequence is GNMNFANYLHIPYLRH. A helical transmembrane segment spans residues 236-256; sequence AGELVIVCTAIVGAGLGFLWF. The Cytoplasmic portion of the chain corresponds to 257–262; it reads NTYPAQ. The helical transmembrane segment at 263–283 threads the bilayer; sequence VFMGDVGSLALGGALGIIAVL. Residues 284 to 287 are Periplasmic-facing; it reads LRQE. Residues 288 to 308 traverse the membrane as a helical segment; that stretch reads FLLVIMGGVFVVETLSVILQV. Over 309-337 the chain is Cytoplasmic; it reads GSFKLRGQRIFRMAPIHHHYELKGWPEPR. The helical transmembrane segment at 338 to 358 threads the bilayer; that stretch reads VIVRFWIISLMLVLIGLATLK. At 359–360 the chain is on the periplasmic side; that stretch reads VR.

Belongs to the glycosyltransferase 4 family. MraY subfamily. It depends on Mg(2+) as a cofactor.

It localises to the cell inner membrane. The enzyme catalyses UDP-N-acetyl-alpha-D-muramoyl-L-alanyl-gamma-D-glutamyl-meso-2,6-diaminopimeloyl-D-alanyl-D-alanine + di-trans,octa-cis-undecaprenyl phosphate = di-trans,octa-cis-undecaprenyl diphospho-N-acetyl-alpha-D-muramoyl-L-alanyl-D-glutamyl-meso-2,6-diaminopimeloyl-D-alanyl-D-alanine + UMP. Its pathway is cell wall biogenesis; peptidoglycan biosynthesis. Its function is as follows. Catalyzes the initial step of the lipid cycle reactions in the biosynthesis of the cell wall peptidoglycan: transfers peptidoglycan precursor phospho-MurNAc-pentapeptide from UDP-MurNAc-pentapeptide onto the lipid carrier undecaprenyl phosphate, yielding undecaprenyl-pyrophosphoryl-MurNAc-pentapeptide, known as lipid I. This Salmonella agona (strain SL483) protein is Phospho-N-acetylmuramoyl-pentapeptide-transferase.